The following is a 1404-amino-acid chain: DNA-directed RNA polymerase subunit beta' (1404 aa).

Residues cysteine 70, cysteine 72, cysteine 85, and cysteine 88 each contribute to the Zn(2+) site. Mg(2+)-binding residues include aspartate 458, aspartate 460, and aspartate 462. 4 residues coordinate Zn(2+): cysteine 813, cysteine 887, cysteine 894, and cysteine 897. The interval 1377–1404 (ERRAIAESEAAELEASQAETSDENAAAE) is disordered.

It belongs to the RNA polymerase beta' chain family. In terms of assembly, the RNAP catalytic core consists of 2 alpha, 1 beta, 1 beta' and 1 omega subunit. When a sigma factor is associated with the core the holoenzyme is formed, which can initiate transcription. The cofactor is Mg(2+). Zn(2+) serves as cofactor.

The enzyme catalyses RNA(n) + a ribonucleoside 5'-triphosphate = RNA(n+1) + diphosphate. Its function is as follows. DNA-dependent RNA polymerase catalyzes the transcription of DNA into RNA using the four ribonucleoside triphosphates as substrates. This chain is DNA-directed RNA polymerase subunit beta', found in Polaromonas naphthalenivorans (strain CJ2).